Here is a 596-residue protein sequence, read N- to C-terminus: Fructan 1-exohydrolase w3 (596 aa).

An N-terminal signal peptide occupies residues 1-20 (MAQAWAFLLPVLVLGSYVTS). The active site involves D75. N-linked (GlcNAc...) asparagine glycosylation is found at N168, N236, and N248. C446 and C492 are disulfide-bonded.

It belongs to the glycosyl hydrolase 32 family. In terms of tissue distribution, expressed in the stem, particularly the penultimate internode. Little expression is detected in roots and in the peduncle part of the stem.

It catalyses the reaction Hydrolysis of terminal, non-reducing (2-&gt;1)-linked beta-D-fructofuranose residues in fructans.. Its activity is regulated as follows. Inhibited by sucrose. Functionally, hydrolyzes inulin-type beta-(2,1)-fructans and beta-(2,1)-linkages in branched fructans. Has low activity against beta-(2,6)-linked fructans. May play a role as a beta-(2,1)-trimmer during graminan biosynthesis. In Triticum aestivum (Wheat), this protein is Fructan 1-exohydrolase w3.